The chain runs to 787 residues: Endonuclease MutS2 (787 aa).

Residue 331–338 (GPNTGGKT) participates in ATP binding. The region spanning 711–786 (IDVRGKTSDD…EQGVTVVELK (76 aa)) is the Smr domain.

It belongs to the DNA mismatch repair MutS family. MutS2 subfamily. As to quaternary structure, homodimer. Binds to stalled ribosomes, contacting rRNA.

In terms of biological role, endonuclease that is involved in the suppression of homologous recombination and thus may have a key role in the control of bacterial genetic diversity. Its function is as follows. Acts as a ribosome collision sensor, splitting the ribosome into its 2 subunits. Detects stalled/collided 70S ribosomes which it binds and splits by an ATP-hydrolysis driven conformational change. Acts upstream of the ribosome quality control system (RQC), a ribosome-associated complex that mediates the extraction of incompletely synthesized nascent chains from stalled ribosomes and their subsequent degradation. Probably generates substrates for RQC. The polypeptide is Endonuclease MutS2 (Caldicellulosiruptor bescii (strain ATCC BAA-1888 / DSM 6725 / KCTC 15123 / Z-1320) (Anaerocellum thermophilum)).